The chain runs to 350 residues: dTDP-D-glucose 4,6-dehydratase (350 aa).

Thr-142 contributes to the substrate binding site. The active-site Proton donor is Asp-143. Active-site proton acceptor residues include Glu-144 and Tyr-166.

It belongs to the NAD(P)-dependent epimerase/dehydratase family. dTDP-glucose dehydratase subfamily. Requires NAD(+) as cofactor.

The enzyme catalyses dTDP-alpha-D-glucose = dTDP-4-dehydro-6-deoxy-alpha-D-glucose + H2O. The polypeptide is dTDP-D-glucose 4,6-dehydratase (TGDS) (Homo sapiens (Human)).